The following is a 1661-amino-acid chain: Pentafunctional AROM polypeptide (1661 aa).

A 3-dehydroquinate synthase region spans residues 1–388 (MATNGVKAEP…YEKKASSVVD (388 aa)). NAD(+)-binding positions include 50–52 (DTN), 87–90 (ETSK), 118–120 (GGV), and Asp123. Residue Arg134 participates in 7-phospho-2-dehydro-3-deoxy-D-arabino-heptonate binding. 143 to 144 (TT) is a binding site for NAD(+). Asp150 and Lys156 together coordinate 7-phospho-2-dehydro-3-deoxy-D-arabino-heptonate. Lys165 is an NAD(+) binding site. Asn166 provides a ligand contact to 7-phospho-2-dehydro-3-deoxy-D-arabino-heptonate. NAD(+) contacts are provided by residues 183–186 (FLET) and Asn194. Glu198 is a Zn(2+) binding site. Residues 198-201 (EVVK) and Lys254 contribute to the 7-phospho-2-dehydro-3-deoxy-D-arabino-heptonate site. The active-site Proton acceptor; for 3-dehydroquinate synthase activity is Glu264. 7-phospho-2-dehydro-3-deoxy-D-arabino-heptonate is bound by residues 268-272 (RNLLN) and His275. His275 contacts Zn(2+). The Proton acceptor; for 3-dehydroquinate synthase activity role is filled by His279. The 7-phospho-2-dehydro-3-deoxy-D-arabino-heptonate site is built by His291 and Lys360. His291 contributes to the Zn(2+) binding site. An EPSP synthase region spans residues 401–850 (VHPGIPSDLN…WDILNQQFKA (450 aa)). Cys832 (for EPSP synthase activity) is an active-site residue. A shikimate kinase region spans residues 872-1064 (QKSIFIIGMR…KKKKQSFFVC (193 aa)). 879–886 (GMRGAGKT) serves as a coordination point for ATP. A 3-dehydroquinase region spans residues 1065 to 1285 (LSAPNLEPCA…TAPGQLSAAD (221 aa)). His1188 (proton acceptor; for 3-dehydroquinate dehydratase activity) is an active-site residue. Lys1216 functions as the Schiff-base intermediate with substrate; for 3-dehydroquinate dehydratase activity in the catalytic mechanism. Residues 1298 to 1661 (TKKFCIFGSP…LTYSWSLGDW (364 aa)) form a shikimate dehydrogenase region.

It in the N-terminal section; belongs to the sugar phosphate cyclases superfamily. Dehydroquinate synthase family. The protein in the 2nd section; belongs to the EPSP synthase family. This sequence in the 3rd section; belongs to the shikimate kinase family. In the 4th section; belongs to the type-I 3-dehydroquinase family. It in the C-terminal section; belongs to the shikimate dehydrogenase family. As to quaternary structure, homodimer. Requires Zn(2+) as cofactor.

It localises to the cytoplasm. The catalysed reaction is 7-phospho-2-dehydro-3-deoxy-D-arabino-heptonate = 3-dehydroquinate + phosphate. It catalyses the reaction 3-dehydroquinate = 3-dehydroshikimate + H2O. It carries out the reaction shikimate + NADP(+) = 3-dehydroshikimate + NADPH + H(+). The enzyme catalyses shikimate + ATP = 3-phosphoshikimate + ADP + H(+). The catalysed reaction is 3-phosphoshikimate + phosphoenolpyruvate = 5-O-(1-carboxyvinyl)-3-phosphoshikimate + phosphate. The protein operates within metabolic intermediate biosynthesis; chorismate biosynthesis; chorismate from D-erythrose 4-phosphate and phosphoenolpyruvate: step 2/7. It functions in the pathway metabolic intermediate biosynthesis; chorismate biosynthesis; chorismate from D-erythrose 4-phosphate and phosphoenolpyruvate: step 3/7. It participates in metabolic intermediate biosynthesis; chorismate biosynthesis; chorismate from D-erythrose 4-phosphate and phosphoenolpyruvate: step 4/7. Its pathway is metabolic intermediate biosynthesis; chorismate biosynthesis; chorismate from D-erythrose 4-phosphate and phosphoenolpyruvate: step 5/7. The protein operates within metabolic intermediate biosynthesis; chorismate biosynthesis; chorismate from D-erythrose 4-phosphate and phosphoenolpyruvate: step 6/7. In terms of biological role, the AROM polypeptide catalyzes 5 consecutive enzymatic reactions in prechorismate polyaromatic amino acid biosynthesis. This chain is Pentafunctional AROM polypeptide, found in Phaeosphaeria nodorum (strain SN15 / ATCC MYA-4574 / FGSC 10173) (Glume blotch fungus).